The primary structure comprises 407 residues: Tyrosine--tRNA ligase (407 aa).

Residue Tyr-35 participates in L-tyrosine binding. The 'HIGH' region motif lies at Pro-40–His-49. 2 residues coordinate L-tyrosine: Tyr-168 and Gln-172. The 'KMSKS' region motif lies at Lys-228–Thr-232. An ATP-binding site is contributed by Lys-231. One can recognise an S4 RNA-binding domain in the interval Asn-341–Val-405.

Belongs to the class-I aminoacyl-tRNA synthetase family. TyrS type 1 subfamily. In terms of assembly, homodimer.

It localises to the cytoplasm. It carries out the reaction tRNA(Tyr) + L-tyrosine + ATP = L-tyrosyl-tRNA(Tyr) + AMP + diphosphate + H(+). Its function is as follows. Catalyzes the attachment of tyrosine to tRNA(Tyr) in a two-step reaction: tyrosine is first activated by ATP to form Tyr-AMP and then transferred to the acceptor end of tRNA(Tyr). The protein is Tyrosine--tRNA ligase of Clostridium botulinum (strain Loch Maree / Type A3).